Reading from the N-terminus, the 218-residue chain is Large ribosomal subunit protein bL25 (218 aa).

The segment at 187 to 218 (SATAAVEEAKEDGAPEESAQGQGAAEAQETNK) is disordered. A compositionally biased stretch (low complexity) spans 202–218 (EESAQGQGAAEAQETNK).

This sequence belongs to the bacterial ribosomal protein bL25 family. CTC subfamily. In terms of assembly, part of the 50S ribosomal subunit; part of the 5S rRNA/L5/L18/L25 subcomplex. Contacts the 5S rRNA. Binds to the 5S rRNA independently of L5 and L18.

Its function is as follows. This is one of the proteins that binds to the 5S RNA in the ribosome where it forms part of the central protuberance. This is Large ribosomal subunit protein bL25 from Anaplasma marginale (strain St. Maries).